The primary structure comprises 92 residues: Dynein light chain 1, cytoplasmic (92 aa).

The protein belongs to the dynein light chain family. Homodimer. Cytoplasmic dynein consists of two catalytic heavy chains (HCs) and a number of non-catalytic subunits which present intermediate chains (ICs), light intermediate chains (LICs) and light chains (LCs). Component of the nuclear pore complex (NPC). NPC constitutes the exclusive means of nucleocytoplasmic transport. NPCs allow the passive diffusion of ions and small molecules and the active, nuclear transport receptor-mediated bidirectional transport of macromolecules such as proteins, RNAs, ribonucleoparticles (RNPs), and ribosomal subunits across the nuclear envelope. Due to its 8-fold rotational symmetry, all subunits are present with 8 copies or multiples thereof. Part of the NUP82 subcomplex. In the complex, interacts directly with Nup159.

The protein resides in the cytoplasm. Its subcellular location is the cytoskeleton. It localises to the nucleus. The protein localises to the nuclear pore complex. In terms of biological role, acts as one of several non-catalytic accessory components of the cytoplasmic dynein complex that are thought to be involved in linking dynein to cargos and to adapter proteins that regulate dynein function. Cytoplasmic dynein 1 acts as a motor for the intracellular retrograde motility of vesicles and organelles along microtubules. May play a role in changing or maintaining the spatial distribution of cytoskeletal structures. Also a component of the nuclear pore complex where it may contribute to the stable association of the Nup82 subcomplex with the NPC. The polypeptide is Dynein light chain 1, cytoplasmic (DYN2) (Saccharomyces cerevisiae (strain ATCC 204508 / S288c) (Baker's yeast)).